The chain runs to 365 residues: Probable L-tyrosine/L-aspartate decarboxylase (365 aa).

Position 224 is an N6-(pyridoxal phosphate)lysine (Lys-224).

It belongs to the group II decarboxylase family. MfnA subfamily. Pyridoxal 5'-phosphate is required as a cofactor.

The enzyme catalyses L-tyrosine + H(+) = tyramine + CO2. It carries out the reaction L-aspartate + H(+) = beta-alanine + CO2. It participates in cofactor biosynthesis; methanofuran biosynthesis. Its pathway is cofactor biosynthesis; coenzyme A biosynthesis. Its function is as follows. Catalyzes the decarboxylation of L-tyrosine to produce tyramine for methanofuran biosynthesis. Can also catalyze the decarboxylation of L-aspartate to produce beta-alanine for coenzyme A (CoA) biosynthesis. The chain is Probable L-tyrosine/L-aspartate decarboxylase from Methanoregula boonei (strain DSM 21154 / JCM 14090 / 6A8).